A 211-amino-acid polypeptide reads, in one-letter code: Probable nicotinate-nucleotide adenylyltransferase (211 aa).

The protein belongs to the NadD family.

It catalyses the reaction nicotinate beta-D-ribonucleotide + ATP + H(+) = deamido-NAD(+) + diphosphate. It functions in the pathway cofactor biosynthesis; NAD(+) biosynthesis; deamido-NAD(+) from nicotinate D-ribonucleotide: step 1/1. Its function is as follows. Catalyzes the reversible adenylation of nicotinate mononucleotide (NaMN) to nicotinic acid adenine dinucleotide (NaAD). The sequence is that of Probable nicotinate-nucleotide adenylyltransferase from Desulfotalea psychrophila (strain LSv54 / DSM 12343).